Reading from the N-terminus, the 118-residue chain is Iron-sulfur cluster insertion protein ErpA (118 aa).

Residues C46, C110, and C112 each coordinate iron-sulfur cluster.

This sequence belongs to the HesB/IscA family. In terms of assembly, homodimer. Iron-sulfur cluster serves as cofactor.

Its function is as follows. Required for insertion of 4Fe-4S clusters for at least IspG. This is Iron-sulfur cluster insertion protein ErpA from Psychromonas ingrahamii (strain DSM 17664 / CCUG 51855 / 37).